Consider the following 224-residue polypeptide: UPF0758 protein lwe1562 (224 aa).

The MPN domain maps to 102 to 224; it reads VIRCPDDAVK…YISLKEKGYF (123 aa). Residues His173, His175, and Asp186 each coordinate Zn(2+). Residues 173 to 186 carry the JAMM motif motif; sequence HNHPSGDPTPSSED.

The protein belongs to the UPF0758 family.

The protein is UPF0758 protein lwe1562 of Listeria welshimeri serovar 6b (strain ATCC 35897 / DSM 20650 / CCUG 15529 / CIP 8149 / NCTC 11857 / SLCC 5334 / V8).